We begin with the raw amino-acid sequence, 177 residues long: Superoxide dismutase [Cu-Zn] 1 (177 aa).

An N-terminal signal peptide occupies residues 1–20 (MKYTILSLVAGALISCSAMA). The Cu cation site is built by histidine 69, histidine 71, and histidine 94. Residues cysteine 76 and cysteine 172 are joined by a disulfide bond. Zn(2+)-binding residues include histidine 94, histidine 103, histidine 112, and aspartate 115. Histidine 150 contacts Cu cation.

It belongs to the Cu-Zn superoxide dismutase family. Monomer. Cu cation is required as a cofactor. The cofactor is Zn(2+).

The protein resides in the periplasm. It carries out the reaction 2 superoxide + 2 H(+) = H2O2 + O2. In terms of biological role, destroys radicals which are normally produced within the cells and which are toxic to biological systems. The sequence is that of Superoxide dismutase [Cu-Zn] 1 (sodC1) from Salmonella typhimurium (strain 4/74).